Consider the following 117-residue polypeptide: MDMRVLAQLLGLLLLCFPGARCDIQMTQSPSSLSASVGDRVTITCRASQGISSWLAWYQQKPEKAPKSLIYAASSLQSGVPSRFSGSGSGTDFTLTISSLQPEDFATYYCQQYNSYP.

Positions 1 to 22 are cleaved as a signal peptide; it reads MDMRVLAQLLGLLLLCFPGARC. A framework-1 region spans residues 23-45; it reads DIQMTQSPSSLSASVGDRVTITC. An Ig-like domain is found at 24-117; it reads IQMTQSPSSL…YYCQQYNSYP (94 aa). Cysteines 45 and 110 form a disulfide. The tract at residues 46-56 is complementarity-determining-1; the sequence is RASQGISSWLA. A framework-2 region spans residues 57-71; it reads WYQQKPEKAPKSLIY. A complementarity-determining-2 region spans residues 72-78; the sequence is AASSLQS. A framework-3 region spans residues 79-110; sequence GVPSRFSGSGSGTDFTLTISSLQPEDFATYYC. Residues 111–117 form a complementarity-determining-3 region; sequence QQYNSYP.

As to quaternary structure, immunoglobulins are composed of two identical heavy chains and two identical light chains; disulfide-linked.

It is found in the secreted. The protein resides in the cell membrane. Functionally, v region of the variable domain of immunoglobulin light chains that participates in the antigen recognition. Immunoglobulins, also known as antibodies, are membrane-bound or secreted glycoproteins produced by B lymphocytes. In the recognition phase of humoral immunity, the membrane-bound immunoglobulins serve as receptors which, upon binding of a specific antigen, trigger the clonal expansion and differentiation of B lymphocytes into immunoglobulins-secreting plasma cells. Secreted immunoglobulins mediate the effector phase of humoral immunity, which results in the elimination of bound antigens. The antigen binding site is formed by the variable domain of one heavy chain, together with that of its associated light chain. Thus, each immunoglobulin has two antigen binding sites with remarkable affinity for a particular antigen. The variable domains are assembled by a process called V-(D)-J rearrangement and can then be subjected to somatic hypermutations which, after exposure to antigen and selection, allow affinity maturation for a particular antigen. The protein is Immunoglobulin kappa variable 1D-16 of Homo sapiens (Human).